We begin with the raw amino-acid sequence, 499 residues long: GTPase Der (499 aa).

2 consecutive EngA-type G domains span residues 3–166 and 211–384; these read PVVA…MDEV and IKLA…DCST. GTP is bound by residues 9–16, 56–60, 118–121, 217–224, 264–268, and 329–332; these read GRPNVGKS, DTGGI, NKTD, DTAGV, and NKWD. One can recognise a KH-like domain in the interval 385–469; sequence RRVNTSMLTR…PIRIQFKEGD (85 aa).

This sequence belongs to the TRAFAC class TrmE-Era-EngA-EngB-Septin-like GTPase superfamily. EngA (Der) GTPase family. Associates with the 50S ribosomal subunit.

Functionally, GTPase that plays an essential role in the late steps of ribosome biogenesis. The protein is GTPase Der of Erwinia tasmaniensis (strain DSM 17950 / CFBP 7177 / CIP 109463 / NCPPB 4357 / Et1/99).